Consider the following 248-residue polypeptide: UPF0246 protein A1I_02510 (248 aa).

Belongs to the UPF0246 family.

The polypeptide is UPF0246 protein A1I_02510 (Rickettsia bellii (strain OSU 85-389)).